Here is a 407-residue protein sequence, read N- to C-terminus: 3-oxoacyl-[acyl-carrier-protein] synthase 1 (407 aa).

Residues 1-406 (MKRVVITGFG…GTNVSLILKK (406 aa)) form the Ketosynthase family 3 (KS3) domain. Residues C164, H300, and H336 each act as for beta-ketoacyl synthase activity in the active site.

Belongs to the thiolase-like superfamily. Beta-ketoacyl-ACP synthases family. In terms of assembly, homodimer.

The protein localises to the cytoplasm. It catalyses the reaction a fatty acyl-[ACP] + malonyl-[ACP] + H(+) = a 3-oxoacyl-[ACP] + holo-[ACP] + CO2. It carries out the reaction (3Z)-decenoyl-[ACP] + malonyl-[ACP] + H(+) = 3-oxo-(5Z)-dodecenoyl-[ACP] + holo-[ACP] + CO2. The protein operates within lipid metabolism; fatty acid biosynthesis. In terms of biological role, involved in the type II fatty acid elongation cycle. Catalyzes the elongation of a wide range of acyl-ACP by the addition of two carbons from malonyl-ACP to an acyl acceptor. Can also use unsaturated fatty acids. Catalyzes a key reaction in unsaturated fatty acid (UFA) synthesis, the elongation of the cis-3-decenoyl-ACP produced by FabA. The chain is 3-oxoacyl-[acyl-carrier-protein] synthase 1 (fabB) from Buchnera aphidicola subsp. Schizaphis graminum (strain Sg).